The following is a 198-amino-acid chain: MLPETTTLQPLPSVTTIMNEPPARSPMEDYYLFNQFQYNQNPYVYPPQPVYYNTWQDASTHHFDPFQSYQIPSPYEQPIQSSMCTTPLQPLEDSRIIFDESLTKNENEQKSFVEQDSSYESSGNRFGSQKGKKIAKVIRDACCSHCSTTTTTLWRKNDEGNLECNACNLYYRHNKVKRPLSLCKQKPTTRKRRQAKKE.

A compositionally biased stretch (polar residues) spans Met-1–Met-18. The segment at Met-1–Glu-20 is disordered. The segment at Cys-143 to Cys-167 adopts a GATA-type zinc-finger fold.

The protein resides in the nucleus. Transcriptional activator that binds to the consensus sequence 5'-[AT]GATA[AG]-3'. Required for gut-specific differentiation, specifically acting with the GATA region-binding transcription factor elt-2 to control normal gene expression and promote normal formation of the intestine. May have a protective role in response to infection by Gram-negative bacteria such as P.aeruginosa. This chain is Transcription factor elt-7, found in Caenorhabditis elegans.